The chain runs to 281 residues: NADPH-dependent 7-cyano-7-deazaguanine reductase (281 aa).

87 to 89 (VES) is a binding site for substrate. 89–90 (SK) lines the NADPH pocket. The Thioimide intermediate role is filled by cysteine 188. Catalysis depends on aspartate 195, which acts as the Proton donor. 227 to 228 (HE) is a substrate binding site. 256-257 (RG) serves as a coordination point for NADPH.

It belongs to the GTP cyclohydrolase I family. QueF type 2 subfamily. Homodimer.

It localises to the cytoplasm. It catalyses the reaction 7-aminomethyl-7-carbaguanine + 2 NADP(+) = 7-cyano-7-deazaguanine + 2 NADPH + 3 H(+). Its pathway is tRNA modification; tRNA-queuosine biosynthesis. In terms of biological role, catalyzes the NADPH-dependent reduction of 7-cyano-7-deazaguanine (preQ0) to 7-aminomethyl-7-deazaguanine (preQ1). This chain is NADPH-dependent 7-cyano-7-deazaguanine reductase, found in Aliivibrio fischeri (strain ATCC 700601 / ES114) (Vibrio fischeri).